We begin with the raw amino-acid sequence, 384 residues long: Spermidine/putrescine import ATP-binding protein PotA (384 aa).

Residues isoleucine 6–isoleucine 238 form the ABC transporter domain. Glycine 40 to serine 47 is a binding site for ATP.

The protein belongs to the ABC transporter superfamily. Spermidine/putrescine importer (TC 3.A.1.11.1) family. As to quaternary structure, the complex is composed of two ATP-binding proteins (PotA), two transmembrane proteins (PotB and PotC) and a solute-binding protein (PotD).

The protein localises to the cell membrane. It catalyses the reaction ATP + H2O + polyamine-[polyamine-binding protein]Side 1 = ADP + phosphate + polyamineSide 2 + [polyamine-binding protein]Side 1.. Its function is as follows. Part of the ABC transporter complex PotABCD involved in spermidine/putrescine import. Responsible for energy coupling to the transport system. The polypeptide is Spermidine/putrescine import ATP-binding protein PotA (Streptococcus pyogenes serotype M6 (strain ATCC BAA-946 / MGAS10394)).